A 28-amino-acid polypeptide reads, in one-letter code: MSYIVRFTGLLLLNAFIVRGRPVGGIQH.

Its function is as follows. Involved in control of the biosynthesis of leucine. This chain is leu operon leader peptide (leuL), found in Salmonella typhi.